Here is a 267-residue protein sequence, read N- to C-terminus: Apolipoprotein A-I (267 aa).

Residues 1 to 18 form the signal peptide; that stretch reads MKAAVLTLAVLFLTGSQA. A run of 2 repeats spans residues 68–89 and 90–111. The segment at 68–267 is 10 X approximate tandem repeats; it reads LKLLDNWDSV…EEYTKKLNTQ (200 aa). M110 carries the post-translational modification Methionine sulfoxide. Residues 112 to 122 form a 3; half-length repeat; it reads KDLEEVKAKVQ. 5 repeat units span residues 123–144, 145–166, 167–188, 189–210, and 211–232. Position 136 is a methionine sulfoxide (M136). One copy of the 9; half-length repeat lies at 233-243; that stretch reads PALEDLRQGLL. Copy 10 of the repeat occupies 244–267; the sequence is PVLESFKVSFLSALEEYTKKLNTQ.

Belongs to the apolipoprotein A1/A4/E family. Homodimer. Interacts with APOA1BP and CLU. Component of a sperm activating protein complex (SPAP), consisting of APOA1, an immunoglobulin heavy chain, an immunoglobulin light chain and albumin. Interacts with NDRG1. Interacts with SCGB3A2. Interacts with NAXE and YJEFN3. Post-translationally, glycosylated. In terms of processing, palmitoylated. Phosphorylation sites are present in the extracellular medium. In terms of tissue distribution, major protein of plasma HDL, also found in chylomicrons.

It localises to the secreted. Its function is as follows. Participates in the reverse transport of cholesterol from tissues to the liver for excretion by promoting cholesterol efflux from tissues and by acting as a cofactor for the lecithin cholesterol acyltransferase (LCAT). As part of the SPAP complex, activates spermatozoa motility. The polypeptide is Apolipoprotein A-I (APOA1) (Pan troglodytes (Chimpanzee)).